The chain runs to 124 residues: Small ribosomal subunit protein uS12 (124 aa).

Positions 9-28 (KSERTVQKNQTKSPALDSCP) are disordered. At aspartate 89 the chain carries 3-methylthioaspartic acid.

It belongs to the universal ribosomal protein uS12 family. In terms of assembly, part of the 30S ribosomal subunit. Contacts proteins S8 and S17. May interact with IF1 in the 30S initiation complex.

Its function is as follows. With S4 and S5 plays an important role in translational accuracy. Interacts with and stabilizes bases of the 16S rRNA that are involved in tRNA selection in the A site and with the mRNA backbone. Located at the interface of the 30S and 50S subunits, it traverses the body of the 30S subunit contacting proteins on the other side and probably holding the rRNA structure together. The combined cluster of proteins S8, S12 and S17 appears to hold together the shoulder and platform of the 30S subunit. In Bdellovibrio bacteriovorus (strain ATCC 15356 / DSM 50701 / NCIMB 9529 / HD100), this protein is Small ribosomal subunit protein uS12.